An 87-amino-acid chain; its full sequence is Small ribosomal subunit protein uS17 (87 aa).

The protein belongs to the universal ribosomal protein uS17 family. As to quaternary structure, part of the 30S ribosomal subunit.

In terms of biological role, one of the primary rRNA binding proteins, it binds specifically to the 5'-end of 16S ribosomal RNA. This is Small ribosomal subunit protein uS17 from Geobacillus stearothermophilus (Bacillus stearothermophilus).